A 106-amino-acid polypeptide reads, in one-letter code: Large ribosomal subunit protein eL36 (106 aa).

Residues 75-93 show a composition bias toward basic and acidic residues; sequence VRQEKVGHSQESKEEERGD. Positions 75–106 are disordered; the sequence is VRQEKVGHSQESKEEERGDVQCSPPDEGWWWY.

It belongs to the eukaryotic ribosomal protein eL36 family.

The protein is Large ribosomal subunit protein eL36 (RPL36) of Daucus carota (Wild carrot).